The following is a 252-amino-acid chain: Delta-like protein dsl-1 (252 aa).

The N-terminal stretch at 1 to 17 is a signal peptide; it reads MLKYLIFLAILISVVHS. The 45-residue stretch at 120-164 folds into the DSL domain; that stretch reads IKCNRYWHGLHCDHFCNDDFARTINRRCTQNGTLGCLEGFHGPNC. Cystine bridges form between cysteine 122/cysteine 131, cysteine 135/cysteine 147, cysteine 155/cysteine 164, cysteine 173/cysteine 181, cysteine 175/cysteine 197, and cysteine 199/cysteine 209. The 42-residue stretch at 169–210 folds into the EGF-like domain; it reads PADSCKCQNGGKCVSSLENTWAQNGSLICECRLGHFEGKHCE.

In terms of assembly, may interact with lin-12/Notch receptor.

Its subcellular location is the secreted. Probable secreted Notch ligand involved in the mediation of Notch signaling. Involved in the lin-12/Notch pathway-mediated signaling of cell fate in vulval precursor cells (VPCs), acting redundantly with lag-2, apx-1 and osm-11. May also be involved in glp-1/Notch signaling. This chain is Delta-like protein dsl-1, found in Caenorhabditis elegans.